The primary structure comprises 259 residues: MKHFLRALKRCSVAVATVAIAVVGLQPVTASAAPNPVVGGTRAAQGEFPFMVRLSMGCGGALYAQDIVLTAAHCVSGSGNNTSITATGGVVDLQSSSAVKVRSTKVLQAPGYNGTGKDWALIKLAQPINQPTLKIATTTAYNQGTFTVAGWGANREGGSQQRYLLKANVPFVSDAACRSAYGNELVANEEICAGYPDTGGVDTCQGDSGGPMFRKDNADEWIQVGIVSWGYGCARPGYPGVYTEVSTFASAIASAARTL.

The first 32 residues, 1 to 32 (MKHFLRALKRCSVAVATVAIAVVGLQPVTASA), serve as a signal peptide directing secretion. The propeptide at 33–36 (APNP) is activation peptide. Residues 37–257 (VVGGTRAAQG…FASAIASAAR (221 aa)) form the Peptidase S1 domain. Cysteine 58 and cysteine 74 are joined by a disulfide. Active-site charge relay system residues include histidine 73 and aspartate 118. Disulfide bonds link cysteine 177-cysteine 192 and cysteine 204-cysteine 233. Residue serine 208 is the Charge relay system of the active site.

The protein belongs to the peptidase S1 family.

The catalysed reaction is Preferential cleavage: Arg-|-Xaa, Lys-|-Xaa.. The sequence is that of Trypsin (sprT) from Streptomyces griseus.